We begin with the raw amino-acid sequence, 464 residues long: Cysteine--tRNA ligase (464 aa).

Residue Cys29 coordinates Zn(2+). The 'HIGH' region signature appears at 31–41; the sequence is ATVQGVPHIGH. Positions 160–180 are disordered; the sequence is RLDEVQQGESTASGKRDPRDF. Cys208, His233, and Glu237 together coordinate Zn(2+). The short motif at 264–268 is the 'KMSKS' region element; it reads KMSKS. Position 267 (Lys267) interacts with ATP.

It belongs to the class-I aminoacyl-tRNA synthetase family. In terms of assembly, monomer. The cofactor is Zn(2+).

It is found in the cytoplasm. The catalysed reaction is tRNA(Cys) + L-cysteine + ATP = L-cysteinyl-tRNA(Cys) + AMP + diphosphate. The protein is Cysteine--tRNA ligase of Saccharopolyspora erythraea (strain ATCC 11635 / DSM 40517 / JCM 4748 / NBRC 13426 / NCIMB 8594 / NRRL 2338).